A 108-amino-acid polypeptide reads, in one-letter code: UPF0060 membrane protein BH2744 (108 aa).

The next 4 helical transmembrane spans lie at 6–26 (TLFL…WLWL), 31–51 (PVYL…IATF), 60–80 (VYAA…WWID), and 86–106 (TYDW…LWAP).

It belongs to the UPF0060 family.

Its subcellular location is the cell membrane. This Halalkalibacterium halodurans (strain ATCC BAA-125 / DSM 18197 / FERM 7344 / JCM 9153 / C-125) (Bacillus halodurans) protein is UPF0060 membrane protein BH2744.